We begin with the raw amino-acid sequence, 657 residues long: Glycogen debranching enzyme (657 aa).

The Nucleophile role is filled by Asp-336. Glu-371 serves as the catalytic Proton donor. The interval 460–481 is disordered; the sequence is ANGEENRDGTNNNYSNNHGKEG.

Belongs to the glycosyl hydrolase 13 family.

It catalyses the reaction Hydrolysis of (1-&gt;6)-alpha-D-glucosidic linkages to branches with degrees of polymerization of three or four glucose residues in limit dextrin.. Its pathway is glycan degradation; glycogen degradation. Functionally, removes maltotriose and maltotetraose chains that are attached by 1,6-alpha-linkage to the limit dextrin main chain, generating a debranched limit dextrin. The sequence is that of Glycogen debranching enzyme from Escherichia coli O157:H7.